A 203-amino-acid chain; its full sequence is MFNVSNNVAPSRYQGPSSTSVTPNAFHDVPSLGQKVGAGSQKDVFHSRQDPRQCICLFRPGTTGSIPAEQYAQKELETTKQLKNLGFPVVDAHALVKHQGSVGVAKDFIHNALDSEDIVNNKKSLPDNLKFNKNVLEDCNAIIRRLKNLEVHIEDLQFLVDHNGHVLINDPRDVVRSSPDKSISKVNELRSHALNNLLDIDSD.

The tract at residues methionine 1–proline 23 is disordered. ATP contacts are provided by serine 40, glutamine 41, lysine 42, aspartate 107, isoleucine 109, and aspartate 114. Residue aspartate 155 is part of the active site. Residue glutamine 157 participates in ATP binding.

It belongs to the HopBF1 family.

The protein resides in the secreted. The protein localises to the host cell. The enzyme catalyses L-seryl-[protein] + ATP = O-phospho-L-seryl-[protein] + ADP + H(+). Its function is as follows. Effector protein that targets and inactivates the eukaryotic molecular chaperone HSP90 during infection. HopBF1 is recognized by HSP90 as a host client. As a result, HopBF1 phosphorylates HSP90, leading to the inactivation of the HSP90 ATPase activity and chaperone function. In vitro, can phosphorylate the recombinant yeast HSP82 (HSP90) and human HSP 90-beta on Ser-108. This Ewingella americana (strain ATCC 33852 / DSM 4580 / CCUG 14506 / JCM 5911 / LMG 7869 / NCTC 12157 / CDC 1468-78) protein is Type III effector protein HopBF1.